Here is a 948-residue protein sequence, read N- to C-terminus: Bifunctional glutamine synthetase adenylyltransferase/adenylyl-removing enzyme (948 aa).

The adenylyl removase stretch occupies residues 1–445; that stretch reads MAPPPDTSGS…IFTEVIAEPP (445 aa). The segment at 451–948 is adenylyl transferase; the sequence is EPLLDGGEAE…WKQIIEAPVF (498 aa).

The protein belongs to the GlnE family. The cofactor is Mg(2+).

It carries out the reaction [glutamine synthetase]-O(4)-(5'-adenylyl)-L-tyrosine + phosphate = [glutamine synthetase]-L-tyrosine + ADP. The catalysed reaction is [glutamine synthetase]-L-tyrosine + ATP = [glutamine synthetase]-O(4)-(5'-adenylyl)-L-tyrosine + diphosphate. Functionally, involved in the regulation of glutamine synthetase GlnA, a key enzyme in the process to assimilate ammonia. When cellular nitrogen levels are high, the C-terminal adenylyl transferase (AT) inactivates GlnA by covalent transfer of an adenylyl group from ATP to specific tyrosine residue of GlnA, thus reducing its activity. Conversely, when nitrogen levels are low, the N-terminal adenylyl removase (AR) activates GlnA by removing the adenylyl group by phosphorolysis, increasing its activity. The regulatory region of GlnE binds the signal transduction protein PII (GlnB) which indicates the nitrogen status of the cell. This chain is Bifunctional glutamine synthetase adenylyltransferase/adenylyl-removing enzyme, found in Methylococcus capsulatus (strain ATCC 33009 / NCIMB 11132 / Bath).